The sequence spans 261 residues: CD40 ligand (261 aa).

Residues 1-22 (MIETYNQPSPRSAATGLPVRMK) are Cytoplasmic-facing. The chain crosses the membrane as a helical; Signal-anchor for type II membrane protein span at residues 23-43 (IFMYLLTIFLITQMIGSALFA). At 44-261 (VYLHRRLDKI…GFTSFGLLKL (218 aa)) the chain is on the extracellular side. The 140-residue stretch at 122–261 (IAAHVISEAS…GFTSFGLLKL (140 aa)) folds into the THD domain. A disulfide bond links Cys178 and Cys218. Asn240 carries N-linked (GlcNAc...) asparagine glycosylation.

The protein belongs to the tumor necrosis factor family. As to quaternary structure, homotrimer. Interacts with CD28. CD40 ligand, soluble form: Exists as either a monomer or a homotrimer. Forms a ternary complex between CD40 and integrins for CD40-CD40LG signaling. In terms of processing, the soluble form derives from the membrane form by proteolytic processing.

Its subcellular location is the cell membrane. It localises to the cell surface. The protein localises to the secreted. Cytokine that acts as a ligand to CD40/TNFRSF5. Costimulates T-cell proliferation and cytokine production. Its cross-linking on T-cells generates a costimulatory signal which enhances the production of IL4 and IL10 in conjunction with the TCR/CD3 ligation and CD28 costimulation. Induces the activation of NF-kappa-B. Induces the activation of kinases MAPK8 and PAK2 in T-cells. Mediates B-cell proliferation in the absence of co-stimulus as well as IgE production in the presence of IL4. Involved in immunoglobulin class switching. In terms of biological role, acts as a ligand for integrins, specifically ITGA5:ITGB1 and ITGAV:ITGB3; both integrins and the CD40 receptor are required for activation of CD40-CD40LG signaling, which have cell-type dependent effects, such as B-cell activation, NF-kappa-B signaling and anti-apoptotic signaling. The chain is CD40 ligand (CD40LG) from Cercocebus atys (Sooty mangabey).